The following is a 349-amino-acid chain: Ribosomal RNA large subunit methyltransferase Cfr (349 aa).

Residue glutamate 89 is the Proton acceptor of the active site. In terms of domain architecture, Radical SAM core spans 96-331 (KAGWESFCIS…VTVRSQFGID (236 aa)). Cysteine 103 and cysteine 336 form a disulfide bridge. [4Fe-4S] cluster-binding residues include cysteine 110, cysteine 114, and cysteine 117. S-adenosyl-L-methionine contacts are provided by residues 156–157 (GE), serine 187, 210–212 (SLH), and asparagine 291. The S-methylcysteine intermediate role is filled by cysteine 336.

This sequence belongs to the radical SAM superfamily. RlmN family. Cfr subfamily. The cofactor is [4Fe-4S] cluster.

The protein resides in the cytoplasm. The catalysed reaction is adenosine(2503) in 23S rRNA + 2 reduced [2Fe-2S]-[ferredoxin] + 2 S-adenosyl-L-methionine = 8-methyladenosine(2503) in 23S rRNA + 5'-deoxyadenosine + L-methionine + 2 oxidized [2Fe-2S]-[ferredoxin] + S-adenosyl-L-homocysteine. Its function is as follows. Specifically methylates position 8 of adenine 2503 in 23S rRNA. Confers resistance to some classes of antibiotics. This chain is Ribosomal RNA large subunit methyltransferase Cfr, found in Bacillus velezensis (strain DSM 23117 / BGSC 10A6 / LMG 26770 / FZB42) (Bacillus amyloliquefaciens subsp. plantarum).